Reading from the N-terminus, the 336-residue chain is CMP-sialic acid transporter (336 aa).

Residues 1 to 9 are Cytoplasmic-facing; it reads MAPARENVS. A helical membrane pass occupies residues 10-30; it reads LFFKLYCLTVMTLVAAAYTVA. Over 31–45 the chain is Lumenal; the sequence is LRYTRTTAEELYFST. The chain crosses the membrane as a helical span at residues 46–64; the sequence is TAVCITEVIKLLISVGLLA. CMP-N-acetyl-beta-neuraminate is bound at residue Lys55. Residues 65 to 87 lie on the Cytoplasmic side of the membrane; sequence KETGSLGRFKASLSENVLGSPKE. Residues 88–108 form a helical membrane-spanning segment; sequence LAKLSVPSLVYAVQNNMAFLA. 101–102 lines the CMP-N-acetyl-beta-neuraminate pocket; that stretch reads QN. The Lumenal portion of the chain corresponds to 109 to 114; sequence LSNLDA. A helical membrane pass occupies residues 115 to 135; it reads AVYQVTYQLKIPCTALCTVLM. Residue 117 to 124 coordinates CMP-N-acetyl-beta-neuraminate; it reads YQVTYQLK. Residues 136–141 are Cytoplasmic-facing; it reads LNRTLS. Residues 142-160 traverse the membrane as a helical segment; the sequence is KLQWISVFMLCGGVTLVQW. Residues 161 to 175 are Lumenal-facing; sequence KPAQATKVVVAQNPL. Residues 176-196 form a helical membrane-spanning segment; sequence LGFGAIAIAVLCSGFAGVYFE. Ser188 lines the CMP-N-acetyl-beta-neuraminate pocket. The Cytoplasmic segment spans residues 197–209; the sequence is KVLKSSDTSLWVR. 210–214 is a CMP-N-acetyl-beta-neuraminate binding site; it reads NIQMY. Residues 210 to 228 traverse the membrane as a helical segment; the sequence is NIQMYLSGIVVTLAGTYLS. The Lumenal segment spans residues 229-243; sequence DGAEIQEKGFFYGYT. Residues 244 to 262 traverse the membrane as a helical segment; the sequence is YYVWFVIFLASVGGLYTSV. The Cytoplasmic portion of the chain corresponds to 263 to 269; the sequence is VVKYTDN. Residues 270–288 traverse the membrane as a helical segment; that stretch reads IMKGFSAAAAIVLSTIASV. CMP-N-acetyl-beta-neuraminate is bound at residue Lys272. The Lumenal portion of the chain corresponds to 289-296; sequence LLFGLQIT. Residues 297 to 315 traverse the membrane as a helical segment; the sequence is LSFALGALLVCVSIYLYGL. Residues 316-336 are Cytoplasmic-facing; it reads PRQDTTSIQQEATSKERIIGV. The segment at 316–336 is disordered; sequence PRQDTTSIQQEATSKERIIGV.

This sequence belongs to the nucleotide-sugar transporter family. SLC35A subfamily. As to quaternary structure, monomer. Ubiquitous. Found in all the tissues examined including skeletal muscle, brain, heart, liver, kidney and spleen.

The protein localises to the golgi apparatus membrane. It carries out the reaction CMP-N-acetyl-beta-neuraminate(in) + CMP(out) = CMP-N-acetyl-beta-neuraminate(out) + CMP(in). The catalysed reaction is CMP-N-acetyl-beta-neuraminate(in) + AMP(out) = CMP-N-acetyl-beta-neuraminate(out) + AMP(in). The enzyme catalyses CDP-L-ribitol(in) + CDP(out) = CDP-L-ribitol(out) + CDP(in). It catalyses the reaction UMP(out) + CMP-N-acetyl-beta-neuraminate(in) = UMP(in) + CMP-N-acetyl-beta-neuraminate(out). Its function is as follows. Transports CMP-sialic acid from the cytosol into the Golgi apparatus, functioning as an antiporter that exchanges CMP-sialic acid for CMP. Binds both CMP-sialic acid and free CMP, but has higher affinity for free CMP. Also able to exchange CMP-sialic acid for AMP and UMP. Also mediates the transport of CDP-ribitol. This chain is CMP-sialic acid transporter, found in Mus musculus (Mouse).